We begin with the raw amino-acid sequence, 336 residues long: Dihydroorotate dehydrogenase (quinone) (336 aa).

Residues 62–66 (AGLDK) and Thr86 contribute to the FMN site. Position 66 (Lys66) interacts with substrate. Residue 111–115 (NRMGF) coordinates substrate. 2 residues coordinate FMN: Asn139 and Asn172. Residue Asn172 coordinates substrate. The active-site Nucleophile is Ser175. A substrate-binding site is contributed by Asn177. Residues Lys217 and Thr245 each coordinate FMN. Position 246-247 (246-247 (NT)) interacts with substrate. FMN contacts are provided by residues Gly268, Gly297, and 318 to 319 (YS).

It belongs to the dihydroorotate dehydrogenase family. Type 2 subfamily. As to quaternary structure, monomer. FMN serves as cofactor.

It localises to the cell membrane. The catalysed reaction is (S)-dihydroorotate + a quinone = orotate + a quinol. The protein operates within pyrimidine metabolism; UMP biosynthesis via de novo pathway; orotate from (S)-dihydroorotate (quinone route): step 1/1. In terms of biological role, catalyzes the conversion of dihydroorotate to orotate with quinone as electron acceptor. The protein is Dihydroorotate dehydrogenase (quinone) of Shigella dysenteriae serotype 1 (strain Sd197).